Here is a 145-residue protein sequence, read N- to C-terminus: MIETIVEQDFNRLFEIEQAAHLVPWSKGTLLNNQGAKYLNLKYTEQDNIIAFAICQTLLDEATLFNLAVDPAFQAQGYAKKLLTALINQLQARGISTLWLEVRQSNTIAQKLYDSVGFNQITIRKNYYPMPDGSRENAVIMALYL.

Positions 1–145 constitute an N-acetyltransferase domain; it reads MIETIVEQDF…ENAVIMALYL (145 aa). 67-69 contributes to the acetyl-CoA binding site; it reads LAV. The Proton acceptor role is filled by E101. N106 serves as a coordination point for acetyl-CoA. Catalysis depends on Y113, which acts as the Proton donor.

It belongs to the acetyltransferase family. RimI subfamily.

It localises to the cytoplasm. It catalyses the reaction N-terminal L-alanyl-[ribosomal protein bS18] + acetyl-CoA = N-terminal N(alpha)-acetyl-L-alanyl-[ribosomal protein bS18] + CoA + H(+). Acetylates the N-terminal alanine of ribosomal protein bS18. This Haemophilus ducreyi (strain 35000HP / ATCC 700724) protein is [Ribosomal protein bS18]-alanine N-acetyltransferase.